We begin with the raw amino-acid sequence, 79 residues long: Conotoxin Vi6.3 (79 aa).

Residues 1–22 (MKLTCVLIITVLFLTASQLITA) form the signal peptide. Residues 23–47 (DYSRDQRQYRAVRLGDEMRNFKGAR) constitute a propeptide that is removed on maturation. 3 disulfide bridges follow: C49–C62, C56–C67, and C61–C77. P60 and P63 each carry 4-hydroxyproline.

This sequence belongs to the conotoxin O1 superfamily. Expressed by the venom duct.

The protein localises to the secreted. Its function is as follows. Ion channel inhibitor that inhibits the increase in intracellular calcium upon depolarization in DRG neurons. In vivo, both intraperitoneal and intracranial injections into mice induce hyperactivity. In Conus virgo (Virgin cone), this protein is Conotoxin Vi6.3.